The sequence spans 736 residues: Poly(A) polymerase gamma (736 aa).

Lys-2 is subject to N6-acetyllysine. 2 positions are modified to phosphoserine: Ser-23 and Ser-29. ATP contacts are provided by residues 99 to 101 (FGS), Thr-108, 112 to 114 (DID), Asp-166, Lys-227, Tyr-236, and 245 to 246 (GV). 3 residues coordinate Mg(2+): Asp-112, Asp-114, and Asp-166. Positions 506-564 (KQSLSDVNRSSGGLQSKRLSLDSSCLDSSRDTDNGTPFNSPASKSDSPSVGETERNSAE) are disordered. Residues 509 to 519 (LSDVNRSSGGL) are compositionally biased toward polar residues. Over residues 521–532 (SKRLSLDSSCLD) the composition is skewed to low complexity. Ser-525 carries the post-translational modification Phosphoserine. The span at 539–555 (NGTPFNSPASKSDSPSV) shows a compositional bias: polar residues. Ser-599 and Ser-648 each carry phosphoserine. A Phosphothreonine modification is found at Thr-654. A compositionally biased stretch (basic and acidic residues) spans 673–685 (DPRTAEERKRKSV). The interval 673–720 (DPRTAEERKRKSVDAIGGESMPIPTIDTSRKKRLPSKELPDSSSPVPA) is disordered. 2 positions are modified to phosphoserine: Ser-684 and Ser-708.

It belongs to the poly(A) polymerase family. Requires Mg(2+) as cofactor. Mn(2+) is required as a cofactor. As to expression, expressed predominantly in testis, and weakly in other tissues. Overexpressed in several tumors.

Its subcellular location is the nucleus. The catalysed reaction is RNA(n) + ATP = RNA(n)-3'-adenine ribonucleotide + diphosphate. Responsible for the post-transcriptional adenylation of the 3'-terminal of mRNA precursors and several small RNAs including signal recognition particle (SRP) RNA, nuclear 7SK RNA, U2 small nuclear RNA, and ribosomal 5S RNA. The protein is Poly(A) polymerase gamma of Homo sapiens (Human).